Here is a 192-residue protein sequence, read N- to C-terminus: Interferon epsilon (192 aa).

Residues 1-21 form the signal peptide; that stretch reads MVHRQLPETVLLLLVSSTIFS. Cys-52 and Cys-162 are disulfide-bonded.

Belongs to the alpha/beta interferon family. Expressed at very high levels in uterus and, at much lower levels, in ovary and cervix. Very low levels, if any, in other organs. In the endometrium, expressed in the luminal and glandular epithelial cells (at protein level).

It localises to the secreted. Type I interferon required for maintaining basal levels of IFN-regulated genes, including 2'-5'-oligoadenylate synthetase, IRF7 and ISG15, in the female reproductive tract. Directly mediates protection against viral, including HSV-2, and bacterial, including Chlamydia muridarum, genital infections. The polypeptide is Interferon epsilon (Ifne) (Mus musculus (Mouse)).